Here is a 318-residue protein sequence, read N- to C-terminus: MIVVTGGAGFIGSNLVKQLNAQGRTDVVVIDDLTDGTKFVNLVDLTIADYMDKDEFQARIVSGDEFEEWDGGIEVIFHEGACSATTEWNGKFIMEVNYEYSKDLFHYCIEREIPFIYASSAATYGGRNDNFIEDPKFEQPLNVYGYSKQLFDQYVRRWMPEINSQVVGLKYFNVYGPREQHKGSMASVAFHLNTQVKKGENPKLFEGCDGFPNGGQMRDFIYVDDVCKVNLWFWLNPQHSGIFNCGTGRAEPFQNVAEAVIKHHQKGAIEYIPFPDHLKGRYQSFTQADMTKLRGVGYDAEFKTVAEGVADYMAWLNR.

NADP(+)-binding positions include 10-11, 31-32, Lys-38, Lys-53, and 79-83; these read FI, DD, and EGACS. The active-site Proton acceptor is Tyr-144. Lys-148 lines the NADP(+) pocket. Position 173 (Asn-173) interacts with substrate. 2 residues coordinate NADP(+): Val-174 and Lys-182. Residue Lys-182 is the Proton acceptor of the active site. Residues Ser-184, His-191, 205-208, Arg-218, and Tyr-282 contribute to the substrate site; that span reads FEGC.

Belongs to the NAD(P)-dependent epimerase/dehydratase family. HldD subfamily. Homopentamer. NADP(+) serves as cofactor.

The enzyme catalyses ADP-D-glycero-beta-D-manno-heptose = ADP-L-glycero-beta-D-manno-heptose. Its pathway is nucleotide-sugar biosynthesis; ADP-L-glycero-beta-D-manno-heptose biosynthesis; ADP-L-glycero-beta-D-manno-heptose from D-glycero-beta-D-manno-heptose 7-phosphate: step 4/4. Its function is as follows. Catalyzes the interconversion between ADP-D-glycero-beta-D-manno-heptose and ADP-L-glycero-beta-D-manno-heptose via an epimerization at carbon 6 of the heptose. This Aeromonas hydrophila subsp. hydrophila (strain ATCC 7966 / DSM 30187 / BCRC 13018 / CCUG 14551 / JCM 1027 / KCTC 2358 / NCIMB 9240 / NCTC 8049) protein is ADP-L-glycero-D-manno-heptose-6-epimerase.